A 147-amino-acid chain; its full sequence is UPF0179 protein NP_3406A (147 aa).

Belongs to the UPF0179 family.

The protein is UPF0179 protein NP_3406A of Natronomonas pharaonis (strain ATCC 35678 / DSM 2160 / CIP 103997 / JCM 8858 / NBRC 14720 / NCIMB 2260 / Gabara) (Halobacterium pharaonis).